The following is a 217-amino-acid chain: Thymidylate kinase (217 aa).

Residue 11–18 participates in ATP binding; the sequence is GLEGAGKS.

This sequence belongs to the thymidylate kinase family.

It catalyses the reaction dTMP + ATP = dTDP + ADP. Its function is as follows. Phosphorylation of dTMP to form dTDP in both de novo and salvage pathways of dTTP synthesis. The sequence is that of Thymidylate kinase from Alkalilimnicola ehrlichii (strain ATCC BAA-1101 / DSM 17681 / MLHE-1).